Consider the following 108-residue polypeptide: MSEVFEITVQPGGERFVCQPQQSALHAMETQGKRCLPVGCRGGGCGLCKVRVLAGDYESGRVSCKHLPVEAREQGYALACRLFARSDLCIERYSKPCSESTVDQQQRE.

The 2Fe-2S ferredoxin-type domain occupies 5-96 (FEITVQPGGE…DLCIERYSKP (92 aa)). Residues Cys-40, Cys-45, Cys-48, and Cys-80 each coordinate [2Fe-2S] cluster.

Belongs to the 2Fe2S plant-type ferredoxin family.

Its pathway is aromatic compound metabolism; catechol degradation. Functionally, ferredoxins are iron-sulfur proteins that transfer electrons in a wide variety of metabolic reactions. The protein is Ferredoxin, plant-type (nahT) of Pseudomonas putida (Arthrobacter siderocapsulatus).